We begin with the raw amino-acid sequence, 311 residues long: PVLQDFSNKGTLWGFVPFVDEQQPTEIPIPITLHIGDYNMDGYPDALVILKNTSGSNQQAFLLENVPCNNASCEEARRMFKVYWELTDLNQIKDAMVATFFDIYEDGILDIVVLSKGYTKNDFAIHTLKNNFEADAYFVKVIVLSGLCSNDCPRKITPFGVNQPGPYIMYTTVDANGYLKNGSAGQLSQSAHLALQLPYNVLGLGRSANFLDHLYVGIPRPSGEKSIRKQEWTAIIPNSQLIVIPYPHNVPRSWSAKLYLTPSNIVLLTAIALIGVCVFILAIIGILHWQEKKADDREKRQEAHRFHFDAM.

N-linked (GlcNAc...) asparagine glycans are attached at residues Asn-52, Asn-70, and Asn-181. The helical transmembrane segment at 266–286 threads the bilayer; it reads VLLTAIALIGVCVFILAIIGI.

Belongs to the TIP family. As to quaternary structure, interacts with RUVBL1, RUVBL2 and alpha-tubulin.

It localises to the secreted. The protein localises to the cell membrane. Its function is as follows. Modulator of T-cell function. Has a protective effect in graft versus host disease model. The sequence is that of T-cell immunomodulatory protein from Macaca fascicularis (Crab-eating macaque).